An 80-amino-acid chain; its full sequence is Dolichol-phosphate mannose synthase subunit 2 (80 aa).

Helical transmembrane passes span 10-30 and 50-70; these read LLLS…VIIL and ILVP…FIGM.

The protein belongs to the DPM2 family. In terms of assembly, component of the dolichol-phosphate mannose (DPM) synthase complex composed of DPMS1, DPMS2 and DPMS3; in the complex interacts directly with DPMS3. Associates with the GPI-GlcNAc transferase (GPI-GnT) complex.

It is found in the endoplasmic reticulum membrane. The protein operates within protein modification; protein glycosylation. Functionally, regulates the biosynthesis of dolichol phosphate-mannose. Regulatory subunit of the dolichol-phosphate mannose (DPM) synthase complex; essential for the ER localization and stable expression of DPMS1. The protein is Dolichol-phosphate mannose synthase subunit 2 of Arabidopsis thaliana (Mouse-ear cress).